The chain runs to 565 residues: Deformed epidermal autoregulatory factor 1 homolog (565 aa).

Disordered regions lie at residues 29–62 and 162–189; these read AAAA…ETRR and GLKG…EKGG. Over residues 169–181 the composition is skewed to pro residues; that stretch reads PLTPGPQSPPTPL. Threonine 171 carries the post-translational modification Phosphothreonine. Position 176 is a phosphoserine (serine 176). Phosphothreonine is present on threonine 179. Positions 193–273 constitute an SAND domain; it reads NWDPSVYDSE…QCLIQDGILN (81 aa). The Nuclear localization signal signature appears at 301-316; that stretch reads KRRKKENELPTTPVKK. The tract at residues 403–478 is interaction with LMO4; that stretch reads IAPFPEAALP…QLKTLFEQAK (76 aa). Phosphothreonine is present on threonine 432. 2 positions are modified to phosphoserine: serine 443 and serine 448. Positions 504, 507, 515, 518, 524, 528, 536, and 540 each coordinate Zn(2+). The MYND-type zinc-finger motif lies at 504–540; the sequence is CVNCGREAMSECTGCHKVNYCSTFCQRKDWKDHQHVC.

Homodimer. Interacts with LMO4; LMO4 blocks export from nucleus. Interacts with LMO2 and CLIM2. May interact with the corepressors NCOR1 and NCRO2. Identified in a complex with XRCC5 and XRCC6. Interacts (via the SAND domain) with the DNA-PK complex subunit XRCC6; the interaction is direct and may be inhibited by DNA-binding. In terms of processing, may be phosphorylated by DNA-PK complex in a DNA independent manner (in vitro). In terms of tissue distribution, ubiquitous. Detected in brain, spleen, adrenal, lung, skeletal muscle, liver, kidney, and in developing germ cells in testis. In pituitary, restricted to hormone-secreting cell types.

It localises to the nucleus. The protein localises to the secreted. Transcription factor that binds to sequence with multiple copies of 5'-TTC[CG]G-3' present in its own promoter and that of the HNRPA2B1 gene. Down-regulates transcription of these genes. Binds to the retinoic acid response element (RARE) 5'-AGGGTTCACCGAAAGTTCA-3'. Activates the proenkephalin gene independently of promoter binding, probably through protein-protein interaction. When secreted, behaves as an inhibitor of cell proliferation, by arresting cells in the G0 or G1 phase. Regulates epithelial cell proliferation and side-branching in the mammary gland. Required for neural tube closure and skeletal patterning. Controls the expression of peripheral tissue antigens in pancreatic lymph nodes. Transcriptional activator of EIF4G3. May also involved in behavior. This chain is Deformed epidermal autoregulatory factor 1 homolog (Deaf1), found in Rattus norvegicus (Rat).